The chain runs to 262 residues: ATP synthase subunit a (262 aa).

The next 5 membrane-spanning stretches (helical) occupy residues 24–44, 84–104, 129–149, 194–214, and 228–248; these read AVHL…LFVF, VIAP…AIDL, DISA…FYTV, LFGN…MYMA, and LVWA…FMML.

Belongs to the ATPase A chain family. As to quaternary structure, F-type ATPases have 2 components, CF(1) - the catalytic core - and CF(0) - the membrane proton channel. CF(1) has five subunits: alpha(3), beta(3), gamma(1), delta(1), epsilon(1). CF(0) has three main subunits: a(1), b(2) and c(9-12). The alpha and beta chains form an alternating ring which encloses part of the gamma chain. CF(1) is attached to CF(0) by a central stalk formed by the gamma and epsilon chains, while a peripheral stalk is formed by the delta and b chains.

Its subcellular location is the cell inner membrane. Functionally, key component of the proton channel; it plays a direct role in the translocation of protons across the membrane. The polypeptide is ATP synthase subunit a (Actinobacillus pleuropneumoniae serotype 3 (strain JL03)).